The following is a 502-amino-acid chain: Neuronal acetylcholine receptor subunit alpha-7 (502 aa).

Positions 1-23 (MGLRALMLWLLAAAGLVRESLQG) are cleaved as a signal peptide. Over 24 to 233 (EFQRKLYKEL…VTMRRRTLYY (210 aa)) the chain is Extracellular. Ca(2+)-binding residues include Arg42 and Val44. N-linked (GlcNAc...) asparagine glycans are attached at residues Asn46, Asn90, and Asn133. Cys150 and Cys164 are disulfide-bonded. Positions 172 and 210 each coordinate Ca(2+). Residues Cys212 and Cys213 are joined by a disulfide bond. A run of 3 helical transmembrane segments spans residues 234-254 (GLNLLIPCVLISALALLVFLL), 262-282 (ISLGITVLLSLTVFMLLVAEI), and 295-315 (QYFASTMIIVGLSVVVTVIVL). At 316–469 (QYHHHDPDGG…WKFAASVVDR (154 aa)) the chain is on the cytoplasmic side. The helical transmembrane segment at 470 to 490 (LCLMAFSVFTIICTIGILMSA) threads the bilayer.

The protein belongs to the ligand-gated ion channel (TC 1.A.9) family. Acetylcholine receptor (TC 1.A.9.1) subfamily. Alpha-7/CHRNA7 sub-subfamily. Homopentamer. Can also form heteropentamers with CHRNB2, mainly found in basal forebrain cholinergic neurons.

It localises to the postsynaptic cell membrane. It is found in the cell membrane. The catalysed reaction is Ca(2+)(in) = Ca(2+)(out). It carries out the reaction K(+)(in) = K(+)(out). The enzyme catalyses Na(+)(in) = Na(+)(out). It catalyses the reaction choline(out) = choline(in). The catalysed reaction is NH4(+)(in) = NH4(+)(out). It carries out the reaction L-arginine(in) = L-arginine(out). The enzyme catalyses guanidine(out) = guanidine(in). With respect to regulation, activated by a myriad of ligands such as acetylcholine, cytisine, nicotine, choline and epibatidine. Activity is modulated by positive allosteric modulators (PAMs), such as flavonoids, with a wide range of chemical diversity, pharmacological sensitivity and efficacy. AChR activity is inhibited by the antagonists alpha-conotoxons RgIA, ImI and ImII, small disulfide-constrained peptides from cone snails. Its function is as follows. Component of neuronal acetylcholine receptors (nAChRs) that function as pentameric, ligand-gated cation channels with high calcium permeability among other activities. nAChRs are excitatory neurotrasnmitter receptors formed by a collection of nAChR subunits known to mediate synaptic transmission in the nervous system and the neuromuscular junction. Each nAchR subunit confers differential attributes to channel properties, including activation, deactivation and desensitization kinetics, pH sensitivity, cation permeability, and binding to allosteric modulators. CHRNA7 is an homooligomeric neuronal acetylcholine receptor abundantly expressed in the central nervous system. Characterized by a fast desensitization and high calcium permeability. Also expressed in non-neuronal cells such as immune cells like lymphocytes, monocytes and macrophages. This Gallus gallus (Chicken) protein is Neuronal acetylcholine receptor subunit alpha-7 (CHRNA7).